A 188-amino-acid chain; its full sequence is Putative manganese efflux pump MntP (188 aa).

6 consecutive transmembrane segments (helical) span residues 3–23 (LYAL…VALA), 35–55 (IAAT…AGWV), 63–83 (FISE…GLKM), 104–126 (WMTV…GLAF), 140–160 (MAAT…GVLF), and 167–187 (AGGL…LGLI).

It belongs to the MntP (TC 9.B.29) family.

The protein resides in the cell inner membrane. Its function is as follows. Probably functions as a manganese efflux pump. In Neisseria gonorrhoeae (strain ATCC 700825 / FA 1090), this protein is Putative manganese efflux pump MntP.